The following is a 214-amino-acid chain: GTP-binding nuclear protein GSP1/Ran (214 aa).

Residues 4-168 (EVPTFKLVLV…LWLARKLAGN (165 aa)) enclose the Small GTPase Ran-type domain. 15–22 (DGGTGKTT) provides a ligand contact to GTP. Positions 34–42 (KKYIATIGV) are switch-I. Residues G65, 119 to 122 (NKVD), and 147 to 149 (SAK) each bind GTP. The switch-II stretch occupies residues 65–81 (GQEKFGGLRDGYYINAQ).

The protein belongs to the small GTPase superfamily. Ran family. Found in a nuclear export complex with RanGTP, exportin and pre-miRNA.

It is found in the nucleus. Functionally, GTP-binding protein involved in nucleocytoplasmic transport. Required for the import of protein into the nucleus and also for RNA export. Involved in chromatin condensation and control of cell cycle. This Candida glabrata (strain ATCC 2001 / BCRC 20586 / JCM 3761 / NBRC 0622 / NRRL Y-65 / CBS 138) (Yeast) protein is GTP-binding nuclear protein GSP1/Ran (GSP1).